A 57-amino-acid polypeptide reads, in one-letter code: Small ribosomal subunit protein eS27 (57 aa).

The Zn(2+) site is built by cysteine 10, cysteine 13, cysteine 29, and cysteine 32. Residues 10–32 (CGDCENEQVVFGKASSVVSCAVC) form a C4-type zinc finger.

It belongs to the eukaryotic ribosomal protein eS27 family. In terms of assembly, part of the 30S ribosomal subunit. The cofactor is Zn(2+).

The protein is Small ribosomal subunit protein eS27 of Halorubrum lacusprofundi (strain ATCC 49239 / DSM 5036 / JCM 8891 / ACAM 34).